The following is a 534-amino-acid chain: uncharacterized protein (534 aa).

Positions Met1 to Ala22 are cleaved as a signal peptide. N-linked (GlcNAc...) asparagine glycosylation is present at Asn31. 2 disordered regions span residues Pro70 to Ser145 and Ser176 to Pro418. N-linked (GlcNAc...) asparagine glycosylation is present at Asn426.

Its subcellular location is the endoplasmic reticulum. It is found in the cell membrane. This is an uncharacterized protein from Schizosaccharomyces pombe (strain 972 / ATCC 24843) (Fission yeast).